The chain runs to 184 residues: Gastrokine-2 (184 aa).

The N-terminal stretch at 1–20 (MKPLVAFLVVLSIFGIQSQA) is a signal peptide. One can recognise a BRICHOS domain in the interval 54–151 (HSGSCSSTTI…LCKHMPLYEG (98 aa)). A disulfide bridge connects residues Cys81 and Cys143.

As to quaternary structure, heterodimer with TFF1; disulfide linked. Interacts with TFF2. As to expression, stomach foveolar epithelium and duodenal Brunner's glands.

The protein resides in the secreted. It localises to the golgi apparatus. In Mus musculus (Mouse), this protein is Gastrokine-2 (Gkn2).